Reading from the N-terminus, the 102-residue chain is Carboxysome shell protein CcmK2 (102 aa).

In terms of domain architecture, BMC spans 4 to 90; sequence AVGMIETRGF…PHENLEYVLP (87 aa).

The protein belongs to the bacterial microcompartments protein family. CcmK subfamily. In terms of assembly, homohexamer. Stacked hexamers, with the concave faces together, have also been crystallized. Interacts preferentially with itself, then with CcmK1 and CcmK4a in vitro. May interact with CcmL, this occurs at very high CcmK2 concentrations. Interacts with CcmN and CcmO in the carboxysome.

The protein localises to the carboxysome. Functionally, probably the major shell protein of the carboxysome, a polyhedral inclusion where RuBisCO (ribulose bisphosphate carboxylase, rbcL-rbcS) is sequestered. Assembles into hexamers which make sheets that form the facets of the polyhedral carboxysome. The hexamer central pore probably regulates metabolite flux. This Thermosynechococcus vestitus (strain NIES-2133 / IAM M-273 / BP-1) protein is Carboxysome shell protein CcmK2.